The sequence spans 465 residues: Ribulose bisphosphate carboxylase large chain (465 aa).

N6,N6,N6-trimethyllysine is present on lysine 4. Substrate is bound by residues asparagine 113 and threonine 163. Lysine 165 functions as the Proton acceptor in the catalytic mechanism. Lysine 167 contacts substrate. Lysine 191, aspartate 193, and glutamate 194 together coordinate Mg(2+). Lysine 191 carries the N6-carboxylysine modification. Histidine 284 (proton acceptor) is an active-site residue. Substrate is bound by residues arginine 285, histidine 317, and serine 369.

Belongs to the RuBisCO large chain family. Type I subfamily. In terms of assembly, heterohexadecamer of 8 large chains and 8 small chains; disulfide-linked. The disulfide link is formed within the large subunit homodimers. Mg(2+) serves as cofactor. The disulfide bond which can form in the large chain dimeric partners within the hexadecamer appears to be associated with oxidative stress and protein turnover.

It is found in the plastid. It localises to the chloroplast. It catalyses the reaction 2 (2R)-3-phosphoglycerate + 2 H(+) = D-ribulose 1,5-bisphosphate + CO2 + H2O. The enzyme catalyses D-ribulose 1,5-bisphosphate + O2 = 2-phosphoglycolate + (2R)-3-phosphoglycerate + 2 H(+). Functionally, ruBisCO catalyzes two reactions: the carboxylation of D-ribulose 1,5-bisphosphate, the primary event in carbon dioxide fixation, as well as the oxidative fragmentation of the pentose substrate in the photorespiration process. Both reactions occur simultaneously and in competition at the same active site. The chain is Ribulose bisphosphate carboxylase large chain from Eucommia ulmoides (Hardy rubber tree).